A 758-amino-acid chain; its full sequence is 5-methyltetrahydropteroyltriglutamate--homocysteine methyltransferase (758 aa).

Residues 17–20 and K117 each bind 5-methyltetrahydropteroyltri-L-glutamate; that span reads RELK. L-homocysteine is bound by residues 434–436 and E487; that span reads IGS. L-methionine is bound by residues 434–436 and E487; that span reads IGS. 5-methyltetrahydropteroyltri-L-glutamate contacts are provided by residues 518-519 and W564; that span reads RC. D602 contributes to the L-homocysteine binding site. An L-methionine-binding site is contributed by D602. E608 lines the 5-methyltetrahydropteroyltri-L-glutamate pocket. Zn(2+) is bound by residues H644, C646, and E668. The active-site Proton donor is the H697. Position 729 (C729) interacts with Zn(2+).

The protein belongs to the vitamin-B12 independent methionine synthase family. The cofactor is Zn(2+).

It catalyses the reaction 5-methyltetrahydropteroyltri-L-glutamate + L-homocysteine = tetrahydropteroyltri-L-glutamate + L-methionine. The protein operates within amino-acid biosynthesis; L-methionine biosynthesis via de novo pathway; L-methionine from L-homocysteine (MetE route): step 1/1. Catalyzes the transfer of a methyl group from 5-methyltetrahydrofolate to homocysteine resulting in methionine formation. The sequence is that of 5-methyltetrahydropteroyltriglutamate--homocysteine methyltransferase from Photorhabdus laumondii subsp. laumondii (strain DSM 15139 / CIP 105565 / TT01) (Photorhabdus luminescens subsp. laumondii).